The chain runs to 583 residues: CTP synthase (583 aa).

Residues 1–278 (MRKHPQTATK…DAYVVRRLNL (278 aa)) form an amidoligase domain region. Ser-20 is a binding site for CTP. Ser-20 serves as a coordination point for UTP. Residues 21-26 (SLGKGL) and Asp-78 each bind ATP. Residues Asp-78 and Glu-152 each coordinate Mg(2+). CTP contacts are provided by residues 159–161 (DIE), 199–204 (KTKPTQ), and Lys-235. UTP is bound by residues 199–204 (KTKPTQ) and Lys-235. A Glutamine amidotransferase type-1 domain is found at 303–551 (RIALVGKYVE…VGAAMDYKAG (249 aa)). Gly-366 contacts L-glutamine. The active-site Nucleophile; for glutamine hydrolysis is Cys-393. L-glutamine is bound by residues 394-397 (LGLQ), Glu-416, and Arg-477. Catalysis depends on residues His-524 and Glu-526. Residues 560–583 (EQSSNGIQHRDSAARPIPEPAARG) form a disordered region.

It belongs to the CTP synthase family. Homotetramer.

It carries out the reaction UTP + L-glutamine + ATP + H2O = CTP + L-glutamate + ADP + phosphate + 2 H(+). It catalyses the reaction L-glutamine + H2O = L-glutamate + NH4(+). The enzyme catalyses UTP + NH4(+) + ATP = CTP + ADP + phosphate + 2 H(+). It functions in the pathway pyrimidine metabolism; CTP biosynthesis via de novo pathway; CTP from UDP: step 2/2. With respect to regulation, allosterically activated by GTP, when glutamine is the substrate; GTP has no effect on the reaction when ammonia is the substrate. The allosteric effector GTP functions by stabilizing the protein conformation that binds the tetrahedral intermediate(s) formed during glutamine hydrolysis. Inhibited by the product CTP, via allosteric rather than competitive inhibition. Its function is as follows. Catalyzes the ATP-dependent amination of UTP to CTP with either L-glutamine or ammonia as the source of nitrogen. Regulates intracellular CTP levels through interactions with the four ribonucleotide triphosphates. The protein is CTP synthase of Mycolicibacterium paratuberculosis (strain ATCC BAA-968 / K-10) (Mycobacterium paratuberculosis).